The primary structure comprises 294 residues: Flavin-dependent thymidylate synthase (294 aa).

Positions 27–250 constitute a ThyX domain; the sequence is GFIRVIDYMG…PFTYEAFEEY (224 aa). Residues Thr-73, 96–98, and Glu-104 contribute to the FAD site; that span reads RHR. DUMP-binding positions include 93–96, 104–108, and Arg-189; these read QWIR and EYSAR. The ThyX motif motif lies at 96–106; it reads RHRTASVNEYS. FAD is bound by residues 205–207 and His-211; that span reads NLH. Position 216 (Arg-216) interacts with dUMP. Arg-216 serves as the catalytic Involved in ionization of N3 of dUMP, leading to its activation.

This sequence belongs to the thymidylate synthase ThyX family. In terms of assembly, homotetramer. The cofactor is FAD.

The enzyme catalyses dUMP + (6R)-5,10-methylene-5,6,7,8-tetrahydrofolate + NADPH + H(+) = dTMP + (6S)-5,6,7,8-tetrahydrofolate + NADP(+). It participates in pyrimidine metabolism; dTTP biosynthesis. Catalyzes the reductive methylation of 2'-deoxyuridine-5'-monophosphate (dUMP) to 2'-deoxythymidine-5'-monophosphate (dTMP) while utilizing 5,10-methylenetetrahydrofolate (mTHF) as the methyl donor, and NADPH and FADH(2) as the reductant. The polypeptide is Flavin-dependent thymidylate synthase (Rickettsia prowazekii (strain Madrid E)).